A 346-amino-acid chain; its full sequence is Phosphoribosylformylglycinamidine cyclo-ligase (346 aa).

This sequence belongs to the AIR synthase family.

The protein resides in the cytoplasm. It catalyses the reaction 2-formamido-N(1)-(5-O-phospho-beta-D-ribosyl)acetamidine + ATP = 5-amino-1-(5-phospho-beta-D-ribosyl)imidazole + ADP + phosphate + H(+). The protein operates within purine metabolism; IMP biosynthesis via de novo pathway; 5-amino-1-(5-phospho-D-ribosyl)imidazole from N(2)-formyl-N(1)-(5-phospho-D-ribosyl)glycinamide: step 2/2. The polypeptide is Phosphoribosylformylglycinamidine cyclo-ligase (Methylobacillus flagellatus (strain ATCC 51484 / DSM 6875 / VKM B-1610 / KT)).